The chain runs to 93 residues: CRISPR-associated endoribonuclease Cas2 1 (93 aa).

Residue Asp8 coordinates Mg(2+).

The protein belongs to the CRISPR-associated endoribonuclease Cas2 protein family. Homodimer, forms a heterotetramer with a Cas1 homodimer. The cofactor is Mg(2+).

CRISPR (clustered regularly interspaced short palindromic repeat), is an adaptive immune system that provides protection against mobile genetic elements (viruses, transposable elements and conjugative plasmids). CRISPR clusters contain sequences complementary to antecedent mobile elements and target invading nucleic acids. CRISPR clusters are transcribed and processed into CRISPR RNA (crRNA). Functions as a ssRNA-specific endoribonuclease. Involved in the integration of spacer DNA into the CRISPR cassette. The chain is CRISPR-associated endoribonuclease Cas2 1 from Chloroflexus aurantiacus (strain ATCC 29366 / DSM 635 / J-10-fl).